The chain runs to 251 residues: Segregation and condensation protein A (251 aa).

This sequence belongs to the ScpA family. In terms of assembly, component of a cohesin-like complex composed of ScpA, ScpB and the Smc homodimer, in which ScpA and ScpB bind to the head domain of Smc. The presence of the three proteins is required for the association of the complex with DNA.

The protein resides in the cytoplasm. Participates in chromosomal partition during cell division. May act via the formation of a condensin-like complex containing Smc and ScpB that pull DNA away from mid-cell into both cell halves. The chain is Segregation and condensation protein A from Clostridium botulinum (strain Alaska E43 / Type E3).